Consider the following 188-residue polypeptide: Phosphatidylinositol N-acetylglucosaminyltransferase subunit H (188 aa).

Belongs to the PIGH family. In terms of assembly, component of the glycosylphosphatidylinositol-N-acetylglucosaminyltransferase (GPI-GnT) complex composed at least by PIGA, PIGC, PIGH, PIGP, PIGQ, PIGY and DPM2. Interacts with PIGQ.

Its subcellular location is the cytoplasm. It participates in glycolipid biosynthesis; glycosylphosphatidylinositol-anchor biosynthesis. Part of the glycosylphosphatidylinositol-N-acetylglucosaminyltransferase (GPI-GnT) complex that catalyzes the transfer of N-acetylglucosamine from UDP-N-acetylglucosamine to phosphatidylinositol and participates in the first step of GPI biosynthesis. This is Phosphatidylinositol N-acetylglucosaminyltransferase subunit H from Bos taurus (Bovine).